A 261-amino-acid polypeptide reads, in one-letter code: Methyl jasmonate esterase 1 (261 aa).

Residues Phe-8–Ala-251 form the AB hydrolase-1 domain. Ser-82 acts as the Acyl-ester intermediate in catalysis. Residues Asp-211 and His-239 each act as charge relay system in the active site.

This sequence belongs to the AB hydrolase superfamily. Methylesterase family. In terms of assembly, homodimer.

It carries out the reaction methyl (-)-jasmonate + H2O = jasmonate + methanol + H(+). It catalyses the reaction methyl salicylate + H2O = salicylate + methanol + H(+). The protein operates within plant hormone biosynthesis. Its pathway is lipid metabolism; oxylipin biosynthesis. In terms of biological role, methylesterase that catalyzes the hydrolysis of methyl jasmonate (MeJA) into jasmonate (JA). Can also use methyl salicylate (MeSA) as substrate with a lower efficiency. This chain is Methyl jasmonate esterase 1, found in Vitis vinifera (Grape).